A 103-amino-acid polypeptide reads, in one-letter code: uncharacterized protein (103 aa).

The helical transmembrane segment at 37–57 threads the bilayer; it reads FILLSSLLIGGLLITIACYHI.

It is found in the membrane. This is an uncharacterized protein from Saccharomyces cerevisiae (strain ATCC 204508 / S288c) (Baker's yeast).